The following is a 92-amino-acid chain: Small ribosomal subunit protein uS19 (92 aa).

The protein belongs to the universal ribosomal protein uS19 family.

Protein S19 forms a complex with S13 that binds strongly to the 16S ribosomal RNA. This is Small ribosomal subunit protein uS19 from Klebsiella pneumoniae (strain 342).